The chain runs to 251 residues: Triosephosphate isomerase (251 aa).

Residue Asn-9–Lys-11 coordinates substrate. The active-site Electrophile is His-94. Glu-163 acts as the Proton acceptor in catalysis. Substrate-binding positions include Gly-169, Ser-209, and Gly-230–Gly-231.

This sequence belongs to the triosephosphate isomerase family. In terms of assembly, homodimer.

Its subcellular location is the cytoplasm. It catalyses the reaction D-glyceraldehyde 3-phosphate = dihydroxyacetone phosphate. It participates in carbohydrate biosynthesis; gluconeogenesis. It functions in the pathway carbohydrate degradation; glycolysis; D-glyceraldehyde 3-phosphate from glycerone phosphate: step 1/1. In terms of biological role, involved in the gluconeogenesis. Catalyzes stereospecifically the conversion of dihydroxyacetone phosphate (DHAP) to D-glyceraldehyde-3-phosphate (G3P). The polypeptide is Triosephosphate isomerase (Dehalococcoides mccartyi (strain ATCC BAA-2266 / KCTC 15142 / 195) (Dehalococcoides ethenogenes (strain 195))).